The primary structure comprises 236 residues: Purine nucleoside phosphorylase DeoD-type 2 (236 aa).

H5 provides a ligand contact to a purine D-ribonucleoside. Residues G21, R25, R44, and 88–91 (RVGS) each bind phosphate. A purine D-ribonucleoside is bound by residues 180–182 (DME) and 204–205 (SD). D205 functions as the Proton donor in the catalytic mechanism.

It belongs to the PNP/UDP phosphorylase family. As to quaternary structure, homohexamer; trimer of homodimers.

It catalyses the reaction a purine D-ribonucleoside + phosphate = a purine nucleobase + alpha-D-ribose 1-phosphate. The enzyme catalyses a purine 2'-deoxy-D-ribonucleoside + phosphate = a purine nucleobase + 2-deoxy-alpha-D-ribose 1-phosphate. Its function is as follows. Catalyzes the reversible phosphorolytic breakdown of the N-glycosidic bond in the beta-(deoxy)ribonucleoside molecules, with the formation of the corresponding free purine bases and pentose-1-phosphate. This Aliivibrio fischeri (strain ATCC 700601 / ES114) (Vibrio fischeri) protein is Purine nucleoside phosphorylase DeoD-type 2.